A 261-amino-acid polypeptide reads, in one-letter code: X-box-binding protein 1 (261 aa).

Residues 1 to 185 are Cytoplasmic-facing; sequence MVVVAAAPNP…VQAQLSPLQN (185 aa). Positions 44-93 are disordered; sequence RGASPEAASGGLPQARKRQRLTHLSPEEKALRRKLKNRVAAQTARDRKKA. A phosphoserine mark is found at S47 and S68. Residues 70–133 enclose the bZIP domain; sequence EEKALRRKLK…HGLVVENQEL (64 aa). Positions 72–94 are basic motif; that stretch reads KALRRKLKNRVAAQTARDRKKAR. Residues 75–92 form a nuclear localization signal (NLS); in isoforms 1 and isoform 2 region; that stretch reads RRKLKNRVAAQTARDRKK. Residues 98 to 133 are leucine-zipper; the sequence is LEQQVVDLEEENQKLLLENQLLREKTHGLVVENQEL. Residues 186-203 form a helical; Signal-anchor for type II membrane protein membrane-spanning segment; sequence ISPWILAVLTLQIQSLIS. The Lumenal segment spans residues 204–261; the sequence is CWAFWTTWTQSCSSNALPQSLPAWRSSQRSTQKDPVPYQPPFLCQWGRHQPSWKPLMN. The segment at 235–261 is necessary for the translational pausing of its own mRNA; sequence QKDPVPYQPPFLCQWGRHQPSWKPLMN.

Belongs to the bZIP family. Isoform 2 interacts with SIRT1. Isoform 2 interacts with PIK3R1 and PIK3R2; the interactions are direct and induce translocation of XBP1 isoform 2 into the nucleus and the unfolded protein response (UPR) XBP1-dependent target genes activation in a ER stress- and/or insulin-dependent but PI3K-independent manner. Isoform 2 interacts with FOXO1; the interaction is direct and leads to FOXO1 ubiquitination and degradation via the proteasome pathway in hepatocytes. Isoform 1 interacts with HM13. Isoform 1 interacts with RNF139; the interaction induces ubiquitination and degradation of isoform 1. Isoform 1 interacts (via luminal domain) with DERL1; the interaction obviates the need for ectodomain shedding prior HM13/SPP-mediated XBP1 isoform 1 cleavage. Isoform 1 interacts with isoform 2; the interaction sequesters isoform 2 from the nucleus and enhances isoform 2 degradation in the cytoplasm. Isoform 1 interacts with HDAC3 and AKT1; the interactions occur in endothelial cell (EC) under disturbed flow. Isoform 1 interacts with the oncoprotein FOS. Isoform 2 interacts with ATF6; the interaction occurs in a ER stress-dependent manner and is required for DNA binding to the unfolded protein response element (UPRE). Isoform 2 interacts with PIK3R1; the interaction is direct and induces translocation of XBP1 isoform 2 into the nucleus and the unfolded protein response (UPR) XBP1-dependent target genes activation in a ER stress- and/or insulin-dependent but PI3K-independent manner. Post-translationally, acetylated by EP300; acetylation positively regulates the transcriptional activity of XBP1 isoform 2. Isoform 2 is deacetylated by SIRT1; deacetylation negatively regulates the transcriptional activity of XBP1 isoform 2. Ubiquitinated, leading to proteasome-mediated degradation in response to ER stress. In terms of processing, X-box-binding protein 1, cytoplasmic form and luminal form are produced by intramembrane proteolytic cleavage of ER membrane-anchored isoform 1 triggered by HM13/SPP in a DERL1-RNF139-dependent and VCP/p97-independent manner. X-box-binding protein 1, luminal form is ubiquitinated leading to proteasomal degradation. As to expression, expressed in plasma cells in rheumatoid synovium. Over-expressed in primary breast cancer and metastatic breast cancer cells. Isoform 1 and isoform 2 are expressed at higher level in proliferating as compared to confluent quiescent endothelial cells.

Its subcellular location is the endoplasmic reticulum. It is found in the nucleus. The protein resides in the cytoplasm. The protein localises to the endoplasmic reticulum membrane. It localises to the membrane. Functionally, functions as a transcription factor during endoplasmic reticulum (ER) stress by regulating the unfolded protein response (UPR). Required for cardiac myogenesis and hepatogenesis during embryonic development, and the development of secretory tissues such as exocrine pancreas and salivary gland. Involved in terminal differentiation of B lymphocytes to plasma cells and production of immunoglobulins. Modulates the cellular response to ER stress in a PIK3R-dependent manner. Binds to the cis-acting X box present in the promoter regions of major histocompatibility complex class II genes. Involved in VEGF-induced endothelial cell (EC) proliferation and retinal blood vessel formation during embryonic development but also for angiogenesis in adult tissues under ischemic conditions. Also functions as a major regulator of the UPR in obesity-induced insulin resistance and type 2 diabetes for the management of obesity and diabetes prevention. Its function is as follows. Plays a role in the unconventional cytoplasmic splicing processing of its own mRNA triggered by the endoplasmic reticulum (ER) transmembrane endoribonuclease ERN1: upon ER stress, the emerging XBP1 polypeptide chain, as part of a mRNA-ribosome-nascent chain (R-RNC) complex, cotranslationally recruits its own unprocessed mRNA through transient docking to the ER membrane and translational pausing, therefore facilitating efficient IRE1-mediated XBP1 mRNA isoform 2 production. In endothelial cells (EC), associated with KDR, promotes IRE1-mediated XBP1 mRNA isoform 2 productions in a vascular endothelial growth factor (VEGF)-dependent manner, leading to EC proliferation and angiogenesis. Functions as a negative feed-back regulator of the potent transcription factor XBP1 isoform 2 protein levels through proteasome-mediated degradation, thus preventing the constitutive activation of the ER stress response signaling pathway. Inhibits the transactivation activity of XBP1 isoform 2 in myeloma cells. Acts as a weak transcriptional factor. Together with HDAC3, contributes to the activation of NFE2L2-mediated HMOX1 transcription factor gene expression in a PI(3)K/mTORC2/Akt-dependent signaling pathway leading to EC survival under disturbed flow/oxidative stress. Binds to the ER stress response element (ERSE) upon ER stress. Binds to the consensus 5'-GATGACGTG[TG]N(3)[AT]T-3' sequence related to cAMP responsive element (CRE)-like sequences. Binds the Tax-responsive element (TRE) present in the long terminal repeat (LTR) of T-cell leukemia virus type 1 (HTLV-I) and to the TPA response elements (TRE). Associates preferentially to the HDAC3 gene promoter region in a static flow-dependent manner. Binds to the CDH5/VE-cadherin gene promoter region. In terms of biological role, functions as a stress-inducible potent transcriptional activator during endoplasmic reticulum (ER) stress by inducing unfolded protein response (UPR) target genes via binding to the UPR element (UPRE). Up-regulates target genes encoding ER chaperones and ER-associated degradation (ERAD) components to enhance the capacity of productive folding and degradation mechanism, respectively, in order to maintain the homeostasis of the ER under ER stress. Plays a role in the production of immunoglobulins and interleukin-6 in the presence of stimuli required for plasma cell differentiation. Induces phospholipid biosynthesis and ER expansion. Contributes to the VEGF-induced endothelial cell (EC) growth and proliferation in a Akt/GSK-dependent and/or -independent signaling pathway, respectively, leading to beta-catenin nuclear translocation and E2F2 gene expression. Promotes umbilical vein EC apoptosis and atherosclerotisis development in a caspase-dependent signaling pathway, and contributes to VEGF-induced EC proliferation and angiogenesis in adult tissues under ischemic conditions. Involved in the regulation of endostatin-induced autophagy in EC through BECN1 transcriptional activation. Plays a role as an oncogene by promoting tumor progression: stimulates zinc finger protein SNAI1 transcription to induce epithelial-to-mesenchymal (EMT) transition, cell migration and invasion of breast cancer cells. Involved in adipocyte differentiation by regulating lipogenic gene expression during lactation. Plays a role in the survival of both dopaminergic neurons of the substantia nigra pars compacta (SNpc), by maintaining protein homeostasis and of myeloma cells. Increases insulin sensitivity in the liver as a response to a high carbohydrate diet, resulting in improved glucose tolerance. Also improves glucose homeostasis in an ER stress- and/or insulin-independent manner through both binding and proteasome-induced degradation of the transcription factor FOXO1, hence resulting in suppression of gluconeogenic genes expression and in a reduction of blood glucose levels. Controls the induction of de novo fatty acid synthesis in hepatocytes by regulating the expression of a subset of lipogenic genes in an ER stress- and UPR-independent manner. Associates preferentially to the HDAC3 gene promoter region in a disturbed flow-dependent manner. Binds to the BECN1 gene promoter region. Binds to the CDH5/VE-cadherin gene promoter region. Binds to the ER stress response element (ERSE) upon ER stress. Binds to the 5'-CCACG-3' motif in the PPARG promoter. This is X-box-binding protein 1 from Homo sapiens (Human).